A 379-amino-acid chain; its full sequence is Orotidine 5'-phosphate decarboxylase (379 aa).

Substrate contacts are provided by residues D42, 64 to 66, and 99 to 108; these read KTH and DRKFGDIGHT. K101 serves as the catalytic Proton donor. A disordered region spans residues 165 to 198; sequence PTMDQFDDAEDAKDDEPATVNDNGSNMMEKPIYA. Positions 169–178 are enriched in acidic residues; that stretch reads QFDDAEDAKD. 2 residues coordinate substrate: Y331 and R350.

Belongs to the OMP decarboxylase family.

It catalyses the reaction orotidine 5'-phosphate + H(+) = UMP + CO2. Its pathway is pyrimidine metabolism; UMP biosynthesis via de novo pathway; UMP from orotate: step 2/2. In Hypocrea atroviridis (Trichoderma atroviride), this protein is Orotidine 5'-phosphate decarboxylase (pyr4).